A 942-amino-acid chain; its full sequence is Apolipoprotein B receptor (942 aa).

Disordered stretches follow at residues 66–212 (GLRS…VTED), 240–269 (ERMV…QAML), 283–487 (DSLG…SPER), 501–607 (AGPE…VPWE), and 671–942 (EGRG…PKPQ). Basic and acidic residues-rich tracts occupy residues 106–123 (QAER…DARG), 132–143 (PEAEPGTHRDRS), 240–252 (ERMV…ERAR), 312–330 (EADK…EAEV), and 338–352 (EAER…HIAE). Residues 353–370 (EEAMGEQETEGSFEDEER) are compositionally biased toward acidic residues. Phosphoserine is present on S364. The span at 384-397 (EEVRAEESSREKRN) shows a compositional bias: basic and acidic residues. A compositionally biased stretch (acidic residues) spans 415–425 (PDWEDSPEVST). Composition is skewed to basic and acidic residues over residues 444–458 (LRVK…ELVR) and 466–475 (QLEEGQKGQE). Phosphoserine occurs at positions 484 and 520. Composition is skewed to basic and acidic residues over residues 514 to 531 (GVDR…EAGK) and 672 to 687 (GRGE…ETTE). Residues 709–721 (QEIDGTEEGEQAE) show a composition bias toward acidic residues. Over residues 837–853 (SRLDVSVPRSRVLLSRS) the composition is skewed to low complexity. The segment covering 854–863 (SSRRRSRPSF) has biased composition (basic residues).

As to quaternary structure, homodimer. In terms of processing, there are 2 forms in macrophages, the membrane-binding proteins 200 kDa (MBP 200) and 235 kDa (MBP 235), that can be reduced into a single active ligand-binding species with intermediate mobility (MBP 200R). Highly expressed in spleen, lung and skeletal muscle, and weakly in brain, heart, kidney, and testis.

It localises to the cell membrane. Functionally, macrophage receptor that binds to the apolipoprotein B48 (APOB) of dietary triglyceride (TG)-rich lipoproteins (TRL) or to a like domain of APOB in hypertriglyceridemic very low density lipoprotein (HTG-VLDL). Binds and internalizes TRL when out of the context of the macrophage. May provide essential lipids to reticuloendothelial cells. Could also be involved in foam cell formation with elevated TRL and remnant lipoprotein (RLP). Mediates the rapid high-affinity uptake of chylomicrons (CM), HTG-VLDL, and trypsinized (tryp) VLDL devoid of APOE in vitro in macrophages. This chain is Apolipoprotein B receptor, found in Mus musculus (Mouse).